The following is a 359-amino-acid chain: Type-1 angiotensin II receptor (359 aa).

The Extracellular segment spans residues 1 to 25; that stretch reads MILNSSTEDGIKRIQDDCPKAGRHN. N-linked (GlcNAc...) asparagine glycosylation occurs at Asn-4. The angiotensin II site is built by Gln-15 and Asp-17. Disulfide bonds link Cys-18-Cys-274 and Cys-101-Cys-180. Residues 26–55 traverse the membrane as a helical segment; that stretch reads YIFIMIPTLYSIIFVVGLFGNSLVVIVIYF. Topologically, residues 56–61 are cytoplasmic; it reads YMKLKT. Residues 62-89 traverse the membrane as a helical segment; it reads VASVFLLNLALADLCFLLTLPLWAVYTA. Over 90–98 the chain is Extracellular; that stretch reads MEYRWPFGN. A helical membrane pass occupies residues 99-125; sequence YLCKIASGSVSFNLYASVFLLTCLSID. The Cytoplasmic portion of the chain corresponds to 126 to 141; the sequence is RYLAIVHPMKSRLRRT. The chain crosses the membrane as a helical span at residues 142 to 165; it reads MLVAKVTCIIIWLLAGLASLPTII. Topologically, residues 166-190 are extracellular; that stretch reads HRNVFFIENTNITVCAFHYESQNST. Arg-167 lines the angiotensin II pocket. A glycan (N-linked (GlcNAc...) asparagine) is linked at Asn-176. Angiotensin II-binding residues include Phe-182, His-183, and Tyr-184. Asn-188 carries N-linked (GlcNAc...) asparagine glycosylation. The chain crosses the membrane as a helical span at residues 191–216; that stretch reads LPVGLGLTKNILGFLFPFLIILTSYT. Lys-199 provides a ligand contact to angiotensin II. Topologically, residues 217-239 are cytoplasmic; sequence LIWKTLKKAYEIQKNKPRKDDIF. A helical membrane pass occupies residues 240–268; that stretch reads KIILAIVLFFFFSWVPHQIFTFMDVLIQL. The Extracellular segment spans residues 269–278; the sequence is GLIRDCKIED. Residues 279–304 traverse the membrane as a helical segment; that stretch reads IVDTAMPITICLAYFNNCLNPPFYGF. Residues 305–359 are Cytoplasmic-facing; that stretch reads LGKKFKKYFLQLLKYIPPKAKSHSNLSTKMSTLSYRPSENGNSSTKKPAPCTEVE. Polar residues predominate over residues 335–350; it reads STLSYRPSENGNSSTK. The interval 335–359 is disordered; the sequence is STLSYRPSENGNSSTKKPAPCTEVE. The S-palmitoyl cysteine moiety is linked to residue Cys-355.

It belongs to the G-protein coupled receptor 1 family. Interacts with MAS1. Interacts with ARRB1. Interacts with FLNA (via filamin repeat 21); increases PKA-mediated phosphorylation of FLNA. Post-translationally, C-terminal Ser or Thr residues may be phosphorylated.

The protein resides in the cell membrane. Receptor for angiotensin II, a vasoconstricting peptide, which acts as a key regulator of blood pressure and sodium retention by the kidney. The activated receptor in turn couples to G-alpha proteins G(q) (GNAQ, GNA11, GNA14 or GNA15) and thus activates phospholipase C and increases the cytosolic Ca(2+) concentrations, which in turn triggers cellular responses such as stimulation of protein kinase C. The polypeptide is Type-1 angiotensin II receptor (AGTR1) (Ovis aries (Sheep)).